The chain runs to 351 residues: Nicotinate-nucleotide--dimethylbenzimidazole phosphoribosyltransferase (351 aa).

Glu313 (proton acceptor) is an active-site residue.

It belongs to the CobT family.

It carries out the reaction 5,6-dimethylbenzimidazole + nicotinate beta-D-ribonucleotide = alpha-ribazole 5'-phosphate + nicotinate + H(+). It participates in nucleoside biosynthesis; alpha-ribazole biosynthesis; alpha-ribazole from 5,6-dimethylbenzimidazole: step 1/2. Functionally, catalyzes the synthesis of alpha-ribazole-5'-phosphate from nicotinate mononucleotide (NAMN) and 5,6-dimethylbenzimidazole (DMB). The protein is Nicotinate-nucleotide--dimethylbenzimidazole phosphoribosyltransferase of Mycobacterium leprae (strain Br4923).